We begin with the raw amino-acid sequence, 163 residues long: Small heat shock protein C1 (163 aa).

The region spanning Thr-55–Asn-163 is the sHSP domain.

This sequence belongs to the small heat shock protein (HSP20) family.

The polypeptide is Small heat shock protein C1 (hspC1) (Rickettsia prowazekii (strain Madrid E)).